The sequence spans 274 residues: uncharacterized protein (274 aa).

This is an uncharacterized protein from Methanocaldococcus jannaschii (strain ATCC 43067 / DSM 2661 / JAL-1 / JCM 10045 / NBRC 100440) (Methanococcus jannaschii).